We begin with the raw amino-acid sequence, 361 residues long: S-adenosylmethionine decarboxylase proenzyme (361 aa).

Catalysis depends on residues Glu-11 and Glu-14. Ser-71 functions as the Schiff-base intermediate with substrate; via pyruvic acid in the catalytic mechanism. Position 71 is a pyruvic acid (Ser); by autocatalysis (Ser-71). Cys-85 serves as the catalytic Proton donor; for catalytic activity. Residues Ser-234 and His-247 each act as proton acceptor; for processing activity in the active site.

It belongs to the eukaryotic AdoMetDC family. Pyruvate serves as cofactor. Is synthesized initially as an inactive proenzyme. Formation of the active enzyme involves a self-maturation process in which the active site pyruvoyl group is generated from an internal serine residue via an autocatalytic post-translational modification. Two non-identical subunits are generated from the proenzyme in this reaction, and the pyruvate is formed at the N-terminus of the alpha chain, which is derived from the carboxyl end of the proenzyme. The post-translation cleavage follows an unusual pathway, termed non-hydrolytic serinolysis, in which the side chain hydroxyl group of the serine supplies its oxygen atom to form the C-terminus of the beta chain, while the remainder of the serine residue undergoes an oxidative deamination to produce ammonia and the pyruvoyl group blocking the N-terminus of the alpha chain.

The catalysed reaction is S-adenosyl-L-methionine + H(+) = S-adenosyl 3-(methylsulfanyl)propylamine + CO2. Its pathway is amine and polyamine biosynthesis; S-adenosylmethioninamine biosynthesis; S-adenosylmethioninamine from S-adenosyl-L-methionine: step 1/1. The chain is S-adenosylmethionine decarboxylase proenzyme (SAMDC) from Daucus carota (Wild carrot).